A 293-amino-acid chain; its full sequence is MDTTRYSKWGGSSEEVPGGPWGRWVHWSRRPLFLALAVLVTTVLWAVILSILLSKASTERAALLDGHDLLRTNASKQTAALGALKEEVGDCHSCCSGTQAQLQTTRAELGEAQAKLMEQESALRELRERVTQGLAEAGRGREDVRTELFRALEAVRLQNNSCEPCPTSWLSFEGSCYFFSVPKTTWAAAQDHCADASAHLVIVGGLDEQGFLTRNTRGRGYWLGLRAVRHLGKVQGYQWVDGVSLSFSHWNQGEPNDAWGRENCVMMLHTGLWNDAPCDSEKDGWICEKRHNC.

Over 1–31 the chain is Cytoplasmic; the sequence is MDTTRYSKWGGSSEEVPGGPWGRWVHWSRRP. Ser-12 carries the phosphoserine modification. A helical; Signal-anchor for type II membrane protein membrane pass occupies residues 32 to 52; the sequence is LFLALAVLVTTVLWAVILSIL. Residues 53 to 293 lie on the Extracellular side of the membrane; the sequence is LSKASTERAA…GWICEKRHNC (241 aa). Asn-73 carries an N-linked (GlcNAc...) asparagine glycan. A coiled-coil region spans residues 96 to 136; sequence SGTQAQLQTTRAELGEAQAKLMEQESALRELRERVTQGLAE. The N-linked (GlcNAc...) asparagine glycan is linked to Asn-159. The C-type lectin domain occupies 172–287; the sequence is FEGSCYFFSV…CDSEKDGWIC (116 aa). Cysteines 264 and 278 form a disulfide.

As to quaternary structure, (Microbial infection) Interacts with Japanese encephalitis virus envelope protein E. (Microbial infection) Interacts with ebolavirus glycoprotein. In terms of assembly, (Microbial infection) Interacts with SARS-CoV spike glycoprotein. As to quaternary structure, (Microbial infection) Interacts with lassa virus and Lymphocytic choriomeningitis virus glycoprotein. In terms of tissue distribution, expressed exclusively in fetal and adult liver and in lymph nodes. Specifically expressed by endothelial cells lining lymph node and liver sinuses (at protein level).

The protein localises to the cell membrane. Functionally, binds mannose, N-acetylglucosamine (GlcNAc) and fucose, but not galactose, in a Ca(2+)-dependent manner, in vitro. (Microbial infection) Acts as a receptor for Japanese encephalitis virus. Its function is as follows. (Microbial infection) Acts as a receptor for Ebolavirus. In terms of biological role, (Microbial infection) Acts as a receptor for SARS-CoV. Functionally, (Microbial infection) Acts as a receptor for Lassa virus and Lymphocytic choriomeningitis virus glycoprotein. The chain is C-type lectin domain family 4 member G (CLEC4G) from Homo sapiens (Human).